The chain runs to 100 residues: Urease subunit gamma (100 aa).

The protein belongs to the urease gamma subunit family. As to quaternary structure, heterotrimer of UreA (gamma), UreB (beta) and UreC (alpha) subunits. Three heterotrimers associate to form the active enzyme.

It localises to the cytoplasm. The enzyme catalyses urea + 2 H2O + H(+) = hydrogencarbonate + 2 NH4(+). Its pathway is nitrogen metabolism; urea degradation; CO(2) and NH(3) from urea (urease route): step 1/1. The protein is Urease subunit gamma of Halalkalibacterium halodurans (strain ATCC BAA-125 / DSM 18197 / FERM 7344 / JCM 9153 / C-125) (Bacillus halodurans).